We begin with the raw amino-acid sequence, 189 residues long: Thermostable direct hemolysin (189 aa).

An N-terminal signal peptide occupies residues M1–A24. C175 and C185 form a disulfide bridge.

This sequence belongs to the TDH hemolysin family. As to quaternary structure, homodimer.

Functionally, bacterial hemolysins are exotoxins that attack blood cell membranes and cause cell rupture by mechanisms not clearly defined. This is Thermostable direct hemolysin (tdh) from Grimontia hollisae (Vibrio hollisae).